The chain runs to 73 residues: Translation initiation factor IF-1 (73 aa).

The S1-like domain maps to 1–72; sequence MAKQDVIEME…TKGRITYRLR (72 aa).

It belongs to the IF-1 family. As to quaternary structure, component of the 30S ribosomal translation pre-initiation complex which assembles on the 30S ribosome in the order IF-2 and IF-3, IF-1 and N-formylmethionyl-tRNA(fMet); mRNA recruitment can occur at any time during PIC assembly.

Its subcellular location is the cytoplasm. One of the essential components for the initiation of protein synthesis. Stabilizes the binding of IF-2 and IF-3 on the 30S subunit to which N-formylmethionyl-tRNA(fMet) subsequently binds. Helps modulate mRNA selection, yielding the 30S pre-initiation complex (PIC). Upon addition of the 50S ribosomal subunit IF-1, IF-2 and IF-3 are released leaving the mature 70S translation initiation complex. The chain is Translation initiation factor IF-1 from Gloeobacter violaceus (strain ATCC 29082 / PCC 7421).